Reading from the N-terminus, the 252-residue chain is Probable transcriptional regulatory protein DSY2470 (252 aa).

It belongs to the TACO1 family.

The protein localises to the cytoplasm. This chain is Probable transcriptional regulatory protein DSY2470, found in Desulfitobacterium hafniense (strain Y51).